The following is a 140-amino-acid chain: ATP synthase epsilon chain (140 aa).

Belongs to the ATPase epsilon chain family. In terms of assembly, F-type ATPases have 2 components, CF(1) - the catalytic core - and CF(0) - the membrane proton channel. CF(1) has five subunits: alpha(3), beta(3), gamma(1), delta(1), epsilon(1). CF(0) has three main subunits: a, b and c.

It localises to the cell inner membrane. In terms of biological role, produces ATP from ADP in the presence of a proton gradient across the membrane. The polypeptide is ATP synthase epsilon chain (Neisseria meningitidis serogroup B (strain ATCC BAA-335 / MC58)).